A 340-amino-acid chain; its full sequence is Major histocompatibility complex class I-related gene protein (340 aa).

Residues 1-22 form the signal peptide; sequence MGELMAFLLPLIIVLMVKHSNS. Residues 23–109 form an alpha-1 region; that stretch reads RTHSLRYFRL…KRLQRHYNHS (87 aa). An antigen-binding cleft region spans residues 23 to 201; it reads RTHSLRYFRL…EYGKDTLQRT (179 aa). The Extracellular portion of the chain corresponds to 23–302; it reads RTHSLRYFRL…QESEAIPLVM (280 aa). 8-(9H-purin-6-yl)-2-oxa-8-azabicyclo[3.3.1]nona-3,6-diene-4,6-dicarbaldehyde contacts are provided by Y29 and R31. 5-(2-oxoethylideneamino)-6-(D-ribitylamino)uracil is bound by residues R31, S46, and K65. 3 residues coordinate 5-(2-oxopropylideneamino)-6-(D-ribitylamino)uracil: R31, S46, and K65. 7-hydroxy-6-methyl-8-(1-D-ribityl)lumazine-binding residues include R31, S46, and K65. Residues K65 and H80 each contribute to the 8-(9H-purin-6-yl)-2-oxa-8-azabicyclo[3.3.1]nona-3,6-diene-4,6-dicarbaldehyde site. K65 lines the 2-amino-4-oxopteridine-6-carbaldehyde pocket. Residue K65 coordinates pyridoxal. Residue N107 is glycosylated (N-linked (GlcNAc...) asparagine). Residues 110-201 form an alpha-2 region; the sequence is GSHTYQRMIG…EYGKDTLQRT (92 aa). R116 contacts 8-(9H-purin-6-yl)-2-oxa-8-azabicyclo[3.3.1]nona-3,6-diene-4,6-dicarbaldehyde. Residues R116, Y174, and Q175 each coordinate 5-(2-oxoethylideneamino)-6-(D-ribitylamino)uracil. 3 residues coordinate 5-(2-oxopropylideneamino)-6-(D-ribitylamino)uracil: R116, Y174, and Q175. Residues R116, Y174, and Q175 each contribute to the 7-hydroxy-6-methyl-8-(1-D-ribityl)lumazine site. 2 disulfide bridges follow: C120-C183 and C222-C278. The tract at residues 202–293 is alpha-3; it reads EPPLVRVNRK…GVHMVLQVPQ (92 aa). In terms of domain architecture, Ig-like C1-type spans 203-282; that stretch reads PPLVRVNRKE…SNLYSCHVEH (80 aa). Residues 294–302 form a connecting peptide region; that stretch reads ESEAIPLVM. A helical transmembrane segment spans residues 303-323; that stretch reads KAVSGSIVFVIVLTGVGVLVW. Residues 324-340 are Cytoplasmic-facing; sequence RRRPREQNGAVYLPTPD.

This sequence belongs to the MHC class I family. As to quaternary structure, heterotrimer that consists of MR1, B2M and metabolite antigen. Major classes of metabolite ligands presented by MR1 include riboflavin-related antigens, pyrimidines and ribityl lumazines, nucleobase adducts and folate derivatives. Forms reversible covalent Schiff base complexes with microbial pyrimidine-based metabolite, which serves as a molecular switch triggering complete folding, stable association with B2M and translocation of the ternary complex from endoplasmic reticulum to the plasma membrane. Alternatively, forms non-Schiff base complexes with ribityl lumazines. On antigen-presenting cells, the ternary complex interacts with TCR on MR1-restricted T cells. Interacts with TAPBP and TAPBPL chaperones in the endoplasmic reticulum. TAPBP associated or not with MHC class I peptide loading complex binds ligand-free MR1 or MR1-B2M complex, providing for stable MR1 pools ready for metabolite antigen processing. TAPBPL interacts with MR1 in a ligand-independent way; this interaction may stabilize MR1 pool and facilitate ligand loading and dissociation. Structurally, MR1-B2M heterodimer adopts a topology similar to classical MHC class I molecules, with alpha-1 and alpha-2 domains of MR1 forming the antigen-binding cleft composed of two alpha-helices resting on a floor of 7-stranded anti-parallel beta-pleated sheet. MR1-B2M heterodimer (via alpha-helices) interacts with TCR (via CDR domains). In terms of processing, N-glycosylated.

The protein resides in the cell membrane. Its subcellular location is the endoplasmic reticulum membrane. The protein localises to the golgi apparatus membrane. It is found in the early endosome membrane. It localises to the late endosome membrane. Antigen-presenting molecule specialized in displaying microbial pyrimidine-based metabolites to alpha-beta T cell receptors (TCR) on innate-type mucosal-associated invariant T (MAIT) cells. In complex with B2M preferentially presents riboflavin-derived metabolites to semi-invariant TCRs on MAIT cells, guiding immune surveillance of the microbial metabolome at mucosal epithelial barriers. Signature pyrimidine-based microbial antigens are generated via non-enzymatic condensation of metabolite intermediates of the riboflavin pathway with by-products arising from other metabolic pathways such as glycolysis. Typical potent antigenic metabolites are 5-(2-oxoethylideneamino)-6-D-ribitylaminouracil (5-OE-RU) and 5-(2-oxopropylideneamino)-6-D-ribitylaminouracil (5-OP-RU), products of condensation of 5-amino-6-D-ribityaminouracil (5-A-RU) with glyoxal or methylglyoxal by-products, respectively. May present microbial antigens to various MAIT cell subsets, providing for unique recognition of diverse microbes, including pathogens that do not synthesize riboflavin. Upon antigen recognition, elicits rapid innate-type MAIT cell activation to eliminate pathogenic microbes by directly killing infected cells. During T cell development, drives thymic selection and post-thymic terminal differentiation of MAIT cells in a process dependent on commensal microflora. Acts as an immune sensor of cancer cell metabolome. May present a tumor-specific or -associated metabolite essential for cancer cell survival to a pan-cancer TCR on a non-MAIT CD8-positive T cell clone, triggering T cell-mediated killing of a wide range of cancer cell types. May present tumor-enriched pyridoxal and pyridoxal 5'-phosphate antigens, enabling preferential recognition of cancer cells. Presents nucleobase carbonyl adducts generated during oxidative stress. Captures M3Ade, a nucleobase adduct composed of one adenine modified by a malondialdehyde trimer, for recognition by MR1-restricted T cell clones expressing a polyclonal TCR repertoire. This is Major histocompatibility complex class I-related gene protein from Pongo pygmaeus (Bornean orangutan).